We begin with the raw amino-acid sequence, 238 residues long: UPF0758 protein Ajs_3450 (238 aa).

The MPN domain maps to 116–238 (VFDSPQAVQH…ALSMAEQGLV (123 aa)). The Zn(2+) site is built by H187, H189, and D200. The JAMM motif motif lies at 187-200 (HNHPSGSVQPSRAD).

Belongs to the UPF0758 family.

The protein is UPF0758 protein Ajs_3450 of Acidovorax sp. (strain JS42).